Consider the following 440-residue polypeptide: Discs overgrown protein kinase (440 aa).

The Protein kinase domain maps to 9 to 277 (YRLGRKIGSG…HLRKLFRNLF (269 aa)). Residues 15 to 23 (IGSGSFGDI) and K38 contribute to the ATP site. The active-site Proton acceptor is the D128. A nuclear localization signal; essential for interaction with Bdbt and important for nuclear localization region spans residues 221–224 (KRQK). Phosphoserine occurs at positions 333 and 334. Positions 376 to 440 (SQLIGGNGLN…GGGGGVGNAK (65 aa)) are disordered. Gly residues predominate over residues 413–440 (QGGGGGGGGVGVGGMPSGGGGGGVGNAK).

The protein belongs to the protein kinase superfamily. CK1 Ser/Thr protein kinase family. Casein kinase I subfamily. As to quaternary structure, forms a complex with per. Interacts with Dlish. Interacts (via nuclear localization signal) with Bdbt. As to expression, detected in the head (at protein level). Expressed in photoreceptor cells of the eyes as well as in the region situated between the optic lobe and the central brain.

The protein localises to the nucleus. The protein resides in the cytoplasm. It is found in the cytosol. It catalyses the reaction L-seryl-[protein] + ATP = O-phospho-L-seryl-[protein] + ADP + H(+). It carries out the reaction L-threonyl-[protein] + ATP = O-phospho-L-threonyl-[protein] + ADP + H(+). Its function is as follows. Serine/threonine-protein kinase which is involved in the circadian rhythm pathway, viability and planar cell polarity. In the circadian rhythm pathway, phosphorylates the clock gene period (per) and targets it for degradation in the absence of timeless (tim), thus contributing to production of the circadian oscillations of the clock genes. Together with CkIalpha, regulates processing of ci by phosphorylating it, which promotes its binding to slmb, the F-box recognition component of the SCF(slmb) E3 ubiquitin-protein ligase. Involved in the inhibition of apoptosis during cell proliferation and growth arrest in imaginal disks. Also functions in planar cell polarity. The chain is Discs overgrown protein kinase (dco) from Drosophila melanogaster (Fruit fly).